The following is a 188-amino-acid chain: GTP-dependent dephospho-CoA kinase (188 aa).

GTP is bound by residues aspartate 43, valine 44, aspartate 62, glutamate 121, and aspartate 144.

The protein belongs to the GTP-dependent DPCK family.

It carries out the reaction 3'-dephospho-CoA + GTP = GDP + CoA + H(+). Its pathway is cofactor biosynthesis; coenzyme A biosynthesis. Functionally, catalyzes the GTP-dependent phosphorylation of the 3'-hydroxyl group of dephosphocoenzyme A to form coenzyme A (CoA). The chain is GTP-dependent dephospho-CoA kinase from Methanococcoides burtonii (strain DSM 6242 / NBRC 107633 / OCM 468 / ACE-M).